The sequence spans 99 residues: MEPVDPNIEPWNQPGSQPKTACNQCYCKKCCYHCQLCFLQKGLGICYGREKRRQRTTTPYASKNHKDPIPKQPLPQARGDPTGPKESKKEVESKTKTDP.

Residues 1-20 (MEPVDPNIEPWNQPGSQPKT) form a disordered region. The interval 1 to 24 (MEPVDPNIEPWNQPGSQPKTACNQ) is interaction with human CREBBP. The segment at 1–48 (MEPVDPNIEPWNQPGSQPKTACNQCYCKKCCYHCQLCFLQKGLGICYG) is transactivation. Zn(2+) is bound by residues cysteine 22, cysteine 25, and cysteine 27. Residues 22 to 37 (CNQCYCKKCCYHCQLC) are cysteine-rich. At lysine 28 the chain carries N6-acetyllysine; by host PCAF. The Zn(2+) site is built by cysteine 30, histidine 33, cysteine 34, and cysteine 37. Residues 38-48 (FLQKGLGICYG) form a core region. The short motif at 49 to 57 (REKRRQRTT) is the Nuclear localization signal, RNA-binding (TAR), and protein transduction element. The segment at 49-86 (REKRRQRTTTPYASKNHKDPIPKQPLPQARGDPTGPKE) is interaction with the host capping enzyme RNGTT. N6-acetyllysine; by host EP300 and GCN5L2 is present on lysine 51. Arginine 52 and arginine 53 each carry asymmetric dimethylarginine; by host PRMT6. Residues 54-99 (QRTTTPYASKNHKDPIPKQPLPQARGDPTGPKESKKEVESKTKTDP) form a disordered region. Lysine 71 is covalently cross-linked (Glycyl lysine isopeptide (Lys-Gly) (interchain with G-Cter in ubiquitin)). Positions 78 to 80 (RGD) match the Cell attachment site motif. Positions 83–99 (GPKESKKEVESKTKTDP) are enriched in basic and acidic residues.

It belongs to the lentiviruses Tat family. As to quaternary structure, interacts with host CCNT1. Associates with the P-TEFb complex composed at least of Tat, P-TEFb (CDK9 and CCNT1), TAR RNA, RNA Pol II. Recruits the HATs CREBBP, TAF1/TFIID, EP300, PCAF and GCN5L2. Interacts with host KAT5/Tip60; this interaction targets the latter to degradation. Interacts with the host deacetylase SIRT1. Interacts with host capping enzyme RNGTT; this interaction stimulates RNGTT. Binds to host KDR, and to the host integrins ITGAV/ITGB3 and ITGA5/ITGB1. Interacts with host KPNB1/importin beta-1 without previous binding to KPNA1/importin alpha-1. Interacts with EIF2AK2. Interacts with host nucleosome assembly protein NAP1L1; this interaction may be required for the transport of Tat within the nucleus, since the two proteins interact at the nuclear rim. Interacts with host C1QBP/SF2P32; this interaction involves lysine-acetylated Tat. Interacts with the host chemokine receptors CCR2, CCR3 and CXCR4. Interacts with host DPP4/CD26; this interaction may trigger an anti-proliferative effect. Interacts with host LDLR. Interacts with the host extracellular matrix metalloproteinase MMP1. Interacts with host PRMT6; this interaction mediates Tat's methylation. Interacts with, and is ubiquitinated by MDM2/Hdm2. Interacts with host PSMC3 and HTATIP2. Interacts with STAB1; this interaction may overcome SATB1-mediated repression of IL2 and IL2RA (interleukin) in T cells by binding to the same domain than HDAC1. Interacts (when acetylated) with human CDK13, thereby increasing HIV-1 mRNA splicing and promoting the production of the doubly spliced HIV-1 protein Nef. Interacts with host TBP; this interaction modulates the activity of transcriptional pre-initiation complex. Interacts with host RELA. Interacts with host PLSCR1; this interaction negatively regulates Tat transactivation activity by altering its subcellular distribution. Post-translationally, asymmetrical arginine methylation by host PRMT6 seems to diminish the transactivation capacity of Tat and affects the interaction with host CCNT1. In terms of processing, acetylation by EP300, CREBBP, GCN5L2/GCN5 and PCAF regulates the transactivation activity of Tat. EP300-mediated acetylation of Lys-50 promotes dissociation of Tat from the TAR RNA through the competitive binding to PCAF's bromodomain. In addition, the non-acetylated Tat's N-terminus can also interact with PCAF. PCAF-mediated acetylation of Lys-28 enhances Tat's binding to CCNT1. Lys-50 is deacetylated by SIRT1. Polyubiquitination by host MDM2 does not target Tat to degradation, but activates its transactivation function and fosters interaction with CCNT1 and TAR RNA. Post-translationally, phosphorylated by EIF2AK2 on serine and threonine residues adjacent to the basic region important for TAR RNA binding and function. Phosphorylation of Tat by EIF2AK2 is dependent on the prior activation of EIF2AK2 by dsRNA.

The protein resides in the host nucleus. The protein localises to the host nucleolus. It localises to the host cytoplasm. It is found in the secreted. Its function is as follows. Transcriptional activator that increases RNA Pol II processivity, thereby increasing the level of full-length viral transcripts. Recognizes a hairpin structure at the 5'-LTR of the nascent viral mRNAs referred to as the transactivation responsive RNA element (TAR) and recruits the cyclin T1-CDK9 complex (P-TEFb complex) that will in turn hyperphosphorylate the RNA polymerase II to allow efficient elongation. The CDK9 component of P-TEFb and other Tat-activated kinases hyperphosphorylate the C-terminus of RNA Pol II that becomes stabilized and much more processive. Other factors such as HTATSF1/Tat-SF1, SUPT5H/SPT5, and HTATIP2 are also important for Tat's function. Besides its effect on RNA Pol II processivity, Tat induces chromatin remodeling of proviral genes by recruiting the histone acetyltransferases (HATs) CREBBP, EP300 and PCAF to the chromatin. This also contributes to the increase in proviral transcription rate, especially when the provirus integrates in transcriptionally silent region of the host genome. To ensure maximal activation of the LTR, Tat mediates nuclear translocation of NF-kappa-B by interacting with host RELA. Through its interaction with host TBP, Tat may also modulate transcription initiation. Tat can reactivate a latently infected cell by penetrating in it and transactivating its LTR promoter. In the cytoplasm, Tat is thought to act as a translational activator of HIV-1 mRNAs. In terms of biological role, extracellular circulating Tat can be endocytosed by surrounding uninfected cells via the binding to several surface receptors such as CD26, CXCR4, heparan sulfate proteoglycans (HSPG) or LDLR. Neurons are rarely infected, but they internalize Tat via their LDLR. Through its interaction with nuclear HATs, Tat is potentially able to control the acetylation-dependent cellular gene expression. Modulates the expression of many cellular genes involved in cell survival, proliferation or in coding for cytokines or cytokine receptors. Tat plays a role in T-cell and neurons apoptosis. Tat induced neurotoxicity and apoptosis probably contribute to neuroAIDS. Circulating Tat also acts as a chemokine-like and/or growth factor-like molecule that binds to specific receptors on the surface of the cells, affecting many cellular pathways. In the vascular system, Tat binds to ITGAV/ITGB3 and ITGA5/ITGB1 integrins dimers at the surface of endothelial cells and competes with bFGF for heparin-binding sites, leading to an excess of soluble bFGF. The polypeptide is Protein Tat (Homo sapiens (Human)).